Here is a 304-residue protein sequence, read N- to C-terminus: Dipeptide transport system permease protein DppC (304 aa).

The interval 1–24 is disordered; it reads MKTEHAKPLMTPEPNSPPPEDQYT. The next 6 membrane-spanning stretches (helical) occupy residues 41-61, 108-128, 141-161, 164-184, 227-247, and 271-291; these read LAIV…FAPL, VGFF…LIAG, IFDI…VAIL, SLQN…GRLV, ATLG…LGLG, and WTVL…NMIG. An ABC transmembrane type-1 domain is found at 102-291; the sequence is ARLSLQVGFF…LVVLGFNMIG (190 aa).

The protein belongs to the binding-protein-dependent transport system permease family. OppBC subfamily.

Its subcellular location is the cell membrane. Functionally, probably part of the ABC transporter Dpp involved in dipeptide transport. Responsible for the translocation of the substrate across the membrane. The polypeptide is Dipeptide transport system permease protein DppC (dppC) (Alkalihalophilus pseudofirmus (strain ATCC BAA-2126 / JCM 17055 / OF4) (Bacillus pseudofirmus)).